The following is a 925-amino-acid chain: Protein translocase subunit SecA (925 aa).

ATP contacts are provided by residues glutamine 87, 105-109, and aspartate 515; that span reads GEGKT. The Zn(2+) site is built by cysteine 909, cysteine 911, cysteine 920, and histidine 921.

This sequence belongs to the SecA family. As to quaternary structure, monomer and homodimer. Part of the essential Sec protein translocation apparatus which comprises SecA, SecYEG and auxiliary proteins SecDF-YajC and YidC. The cofactor is Zn(2+).

The protein localises to the cell inner membrane. The protein resides in the cytoplasm. The enzyme catalyses ATP + H2O + cellular proteinSide 1 = ADP + phosphate + cellular proteinSide 2.. Part of the Sec protein translocase complex. Interacts with the SecYEG preprotein conducting channel. Has a central role in coupling the hydrolysis of ATP to the transfer of proteins into and across the cell membrane, serving both as a receptor for the preprotein-SecB complex and as an ATP-driven molecular motor driving the stepwise translocation of polypeptide chains across the membrane. The chain is Protein translocase subunit SecA from Cupriavidus necator (strain ATCC 17699 / DSM 428 / KCTC 22496 / NCIMB 10442 / H16 / Stanier 337) (Ralstonia eutropha).